Consider the following 62-residue polypeptide: Alpha-lytic protease L1 (62 aa).

The Charge relay system role is filled by S48.

Belongs to the peptidase S1 family. In terms of assembly, monomer.

The protein localises to the secreted. The enzyme catalyses Preferential cleavage: Ala-|-Xaa, Val-|-Xaa in bacterial cell walls, elastin and other proteins.. Inhibited by phenylmethanesulfonyl fluoride (PMSF) and p-chloromercuribenzoate (PCMB). In terms of biological role, has bacteriolytic activity. This Lysobacter sp. (strain XL1) protein is Alpha-lytic protease L1.